A 182-amino-acid chain; its full sequence is Ribosome-recycling factor (182 aa).

The tract at residues 136–158 (IKKQEKEGDLSEDQSRDEQDQVQ) is disordered.

This sequence belongs to the RRF family.

The protein localises to the cytoplasm. Responsible for the release of ribosomes from messenger RNA at the termination of protein biosynthesis. May increase the efficiency of translation by recycling ribosomes from one round of translation to another. The protein is Ribosome-recycling factor of Synechococcus sp. (strain CC9311).